We begin with the raw amino-acid sequence, 308 residues long: Mitoferrin (308 aa).

6 consecutive transmembrane segments (helical) span residues 13 to 29, 69 to 89, 111 to 131, 168 to 184, 213 to 233, and 285 to 302; these read GGSFYVHLIAGAAAGFA, ITGLFRGLTAVAAGAAPSHAV, IKVGIAGAIATMTSEAVASPM, YTTTLVMNVPYNIVYFA, LVAGGGAGMLAAAFTNPFDVV, and MVFHSMSSAIVWSVYEYF. 3 Solcar repeats span residues 14-100, 108-192, and 207-305; these read GSFY…LKFK, HHPI…LKKI, and YQLI…FKFI.

This sequence belongs to the mitochondrial carrier (TC 2.A.29) family.

The protein localises to the mitochondrion inner membrane. Mitochondrial solute carriers shuttle metabolites, nucleotides, and cofactors through the mitochondrial inner membrane. Mitochondrial iron transporter that mediates iron uptake. Probably required for heme synthesis of hemoproteins and Fe-S cluster assembly. This chain is Mitoferrin (mcfF), found in Dictyostelium discoideum (Social amoeba).